The chain runs to 483 residues: Altronate oxidoreductase (483 aa).

18–29 contributes to the NAD(+) binding site; sequence IIQFGEGNFLRA.

The protein belongs to the mannitol dehydrogenase family. UxaB subfamily.

It catalyses the reaction D-altronate + NAD(+) = keto-D-tagaturonate + NADH + H(+). It participates in carbohydrate metabolism; pentose and glucuronate interconversion. This Klebsiella pneumoniae (strain 342) protein is Altronate oxidoreductase.